A 232-amino-acid chain; its full sequence is MLGAMFRAGTPMTPNLNPEGGGHYFIDRDGKAFRHILNFLRLGRLDLPLGYGETALLRAEADFYQIRPLLDALRELEASRGTPAPTAALLHADVDSSPRLVHFSARRGPHHYELSSVQVDTFRANLFCTDPECLGALRARFGVTNEDRAEGGPHFRLEWAPRPAELPEVEYRRLGLQPLWTGAPGEPRDVVGTPSFLEEVLRVALEHGFRLDSVFPDPEDLLNSRSLRFVRH.

Positions 1-49 (MLGAMFRAGTPMTPNLNPEGGGHYFIDRDGKAFRHILNFLRLGRLDLPL) constitute a BTB domain.

Homopentamer. Interacts with KCTD6 and KCTD21; KCTD11 and KCTD6 or KCTD21 may associate in pentameric assemblies. Component of the BCR(KCTD11) E3 ubiquitin ligase complex, at least composed of CUL3 and KCTD11 and RBX1. Interacts (via BTB domain) with CUL3; initially a 4:4 stoichiometry has been reported, however, electron microscopy revealed pentameric states of the BTB domain.

It functions in the pathway protein modification; protein ubiquitination. Functionally, plays a role as a marker and a regulator of neuronal differentiation; Up-regulated by a variety of neurogenic signals, such as retinoic acid, epidermal growth factor/EGF and NGFB/nerve growth factor. Induces apoptosis, growth arrest and the expression of cyclin-dependent kinase inhibitor CDKN1B. Plays a role as a tumor repressor and inhibits cell growth and tumorigenicity of medulloblastoma (MDB). Acts as a probable substrate-specific adapter for a BCR (BTB-CUL3-RBX1) E3 ubiquitin-protein ligase complex towards HDAC1. Functions as antagonist of the Hedgehog pathway on cell proliferation and differentiation by affecting the nuclear transfer of transcription factor GLI1, thus maintaining cerebellar granule cells in undifferentiated state, this effect probably occurs via HDAC1 down-regulation, keeping GLI1 acetylated and inactive. The protein is BTB/POZ domain-containing protein KCTD11 (KCTD11) of Bos taurus (Bovine).